Consider the following 335-residue polypeptide: Fructose-1,6-bisphosphatase class 1 (335 aa).

Residues glutamate 92, aspartate 114, leucine 116, and aspartate 117 each coordinate Mg(2+). Residues aspartate 117–serine 120, asparagine 210, tyrosine 242, and lysine 274 contribute to the substrate site. Residue glutamate 280 participates in Mg(2+) binding.

It belongs to the FBPase class 1 family. As to quaternary structure, homotetramer. It depends on Mg(2+) as a cofactor.

The protein resides in the cytoplasm. The enzyme catalyses beta-D-fructose 1,6-bisphosphate + H2O = beta-D-fructose 6-phosphate + phosphate. The protein operates within carbohydrate biosynthesis; gluconeogenesis. This chain is Fructose-1,6-bisphosphatase class 1, found in Lawsonia intracellularis (strain PHE/MN1-00).